Reading from the N-terminus, the 342-residue chain is L-threonine 3-dehydrogenase (342 aa).

Residue Cys-38 participates in Zn(2+) binding. Residues Thr-40 and His-43 each act as charge relay system in the active site. Zn(2+)-binding residues include His-63, Glu-64, Cys-93, Cys-96, Cys-99, and Cys-107. Residues Ile-175, Asp-195, Arg-200, 262–264 (LGI), and 286–287 (IY) contribute to the NAD(+) site.

This sequence belongs to the zinc-containing alcohol dehydrogenase family. In terms of assembly, homotetramer. The cofactor is Zn(2+).

The protein resides in the cytoplasm. The enzyme catalyses L-threonine + NAD(+) = (2S)-2-amino-3-oxobutanoate + NADH + H(+). The protein operates within amino-acid degradation; L-threonine degradation via oxydo-reductase pathway; glycine from L-threonine: step 1/2. In terms of biological role, catalyzes the NAD(+)-dependent oxidation of L-threonine to 2-amino-3-ketobutyrate. The protein is L-threonine 3-dehydrogenase of Paraburkholderia phymatum (strain DSM 17167 / CIP 108236 / LMG 21445 / STM815) (Burkholderia phymatum).